We begin with the raw amino-acid sequence, 314 residues long: D-alanine--D-alanine ligase (314 aa).

The region spanning 115 to 310 (KQVWQSVGLV…FNELVLEILA (196 aa)) is the ATP-grasp domain. 141–196 (LDSLGGQGFVKPAHEGSSIGMSVVSTAQELKAAYEKAAHYDAKVLVERRIVGREFT) is a binding site for ATP. Mg(2+) is bound by residues Asp-264, Glu-277, and Asn-279.

It belongs to the D-alanine--D-alanine ligase family. Requires Mg(2+) as cofactor. It depends on Mn(2+) as a cofactor.

Its subcellular location is the cytoplasm. It carries out the reaction 2 D-alanine + ATP = D-alanyl-D-alanine + ADP + phosphate + H(+). It participates in cell wall biogenesis; peptidoglycan biosynthesis. Its function is as follows. Cell wall formation. This is D-alanine--D-alanine ligase from Saccharophagus degradans (strain 2-40 / ATCC 43961 / DSM 17024).